The following is a 506-amino-acid chain: Flap endonuclease 1 (506 aa).

Residues 1 to 106 (MGIKGLIPFL…KTLDKRRQKR (106 aa)) are N-domain. Asp34 provides a ligand contact to Mg(2+). Residues Arg47 and Arg72 each coordinate DNA. Positions 88, 160, 162, 181, and 183 each coordinate Mg(2+). The segment at 124–253 (SAKKLVGRTV…KTAYSLVKKY (130 aa)) is I-domain. Glu160 is a DNA binding site. Residues Gly231 and Asp233 each contribute to the DNA site. Asp233 provides a ligand contact to Mg(2+). The interaction with PCNA stretch occupies residues 330-338 (IQTSLLSFL). Over residues 338-347 (LTNPQPTNKS) the composition is skewed to polar residues. Positions 338 to 388 (LTNPQPTNKSKSLDEGPKQSSTEDYKVNTNPSTKGSNVYTTDTNSTKDTKG) are disordered. Positions 348-363 (KSLDEGPKQSSTEDYK) are enriched in basic and acidic residues. Over residues 364 to 381 (VNTNPSTKGSNVYTTDTN) the composition is skewed to polar residues.

Belongs to the XPG/RAD2 endonuclease family. FEN1 subfamily. As to quaternary structure, interacts with PCNA. Three molecules of FEN1 bind to one PCNA trimer with each molecule binding to one PCNA monomer. PCNA stimulates the nuclease activity without altering cleavage specificity. It depends on Mg(2+) as a cofactor. Phosphorylated. Phosphorylation upon DNA damage induces relocalization to the nuclear plasma.

It localises to the nucleus. It is found in the nucleolus. Its subcellular location is the nucleoplasm. The protein resides in the mitochondrion. Structure-specific nuclease with 5'-flap endonuclease and 5'-3' exonuclease activities involved in DNA replication and repair. During DNA replication, cleaves the 5'-overhanging flap structure that is generated by displacement synthesis when DNA polymerase encounters the 5'-end of a downstream Okazaki fragment. It enters the flap from the 5'-end and then tracks to cleave the flap base, leaving a nick for ligation. Also involved in the long patch base excision repair (LP-BER) pathway, by cleaving within the apurinic/apyrimidinic (AP) site-terminated flap. Acts as a genome stabilization factor that prevents flaps from equilibrating into structures that lead to duplications and deletions. Also possesses 5'-3' exonuclease activity on nicked or gapped double-stranded DNA, and exhibits RNase H activity. Also involved in replication and repair of rDNA and in repairing mitochondrial DNA. The sequence is that of Flap endonuclease 1 from Theileria annulata.